The chain runs to 122 residues: uncharacterized protein (122 aa).

It localises to the mitochondrion. This is an uncharacterized protein from Arabidopsis thaliana (Mouse-ear cress).